The following is a 463-amino-acid chain: Argininosuccinate lyase (463 aa).

Belongs to the lyase 1 family. Argininosuccinate lyase subfamily.

It localises to the cytoplasm. The catalysed reaction is 2-(N(omega)-L-arginino)succinate = fumarate + L-arginine. The protein operates within amino-acid biosynthesis; L-arginine biosynthesis; L-arginine from L-ornithine and carbamoyl phosphate: step 3/3. The polypeptide is Argininosuccinate lyase (Staphylococcus epidermidis (strain ATCC 35984 / DSM 28319 / BCRC 17069 / CCUG 31568 / BM 3577 / RP62A)).